The following is a 196-amino-acid chain: Golgi to ER traffic protein 1 (196 aa).

The Lumenal segment spans residues 1-10 (MFLDLHPYTI). The chain crosses the membrane as a helical span at residues 11-30 (LVSIFIILLVKQIVGRIGKS). Over 31-114 (TIQEFVWLLY…SIDKLANVLL (84 aa)) the chain is Cytoplasmic. Positions 76-114 (AKWTKLNRQADKLTSEIQKLNEEIRQSKASIDKLANVLL) form a coiled coil. Residues 115-135 (MVLTTLPIWVARIFFRKTHLF) traverse the membrane as a helical segment. The Lumenal segment spans residues 136–159 (YLRSGIFPRYIEWVLALPFFPSGA). A helical membrane pass occupies residues 160–176 (VGLTVWMFAANSVIHNV). Over 177–196 (ISLVSFAFEKRVEKPVRQKK) the chain is Cytoplasmic.

Belongs to the WRB/GET1 family. Component of the Golgi to ER traffic (GET) complex, which is composed of GET1, GET2 and GET3. Within the complex, GET1 and GET2 form a heterotetramer which is stabilized by phosphatidylinositol binding and which binds to the GET3 homodimer.

The protein localises to the endoplasmic reticulum membrane. The protein resides in the golgi apparatus membrane. In terms of biological role, required for the post-translational delivery of tail-anchored (TA) proteins to the endoplasmic reticulum. Together with GET2, acts as a membrane receptor for soluble GET3, which recognizes and selectively binds the transmembrane domain of TA proteins in the cytosol. The GET complex cooperates with the HDEL receptor ERD2 to mediate the ATP-dependent retrieval of resident ER proteins that contain a C-terminal H-D-E-L retention signal from the Golgi to the ER. The protein is Golgi to ER traffic protein 1 of Candida tropicalis (strain ATCC MYA-3404 / T1) (Yeast).